Here is a 337-residue protein sequence, read N- to C-terminus: UDP-3-O-acylglucosamine N-acyltransferase (337 aa).

Catalysis depends on His238, which acts as the Proton acceptor.

The protein belongs to the transferase hexapeptide repeat family. LpxD subfamily. In terms of assembly, homotrimer.

It catalyses the reaction a UDP-3-O-[(3R)-3-hydroxyacyl]-alpha-D-glucosamine + a (3R)-hydroxyacyl-[ACP] = a UDP-2-N,3-O-bis[(3R)-3-hydroxyacyl]-alpha-D-glucosamine + holo-[ACP] + H(+). Its pathway is bacterial outer membrane biogenesis; LPS lipid A biosynthesis. Catalyzes the N-acylation of UDP-3-O-acylglucosamine using 3-hydroxyacyl-ACP as the acyl donor. Is involved in the biosynthesis of lipid A, a phosphorylated glycolipid that anchors the lipopolysaccharide to the outer membrane of the cell. The protein is UDP-3-O-acylglucosamine N-acyltransferase of Xanthomonas oryzae pv. oryzae (strain KACC10331 / KXO85).